Here is a 336-residue protein sequence, read N- to C-terminus: 3-isopropylmalate dehydrogenase (336 aa).

Residues R87, R97, R121, and D211 each coordinate substrate. Mg(2+) contacts are provided by D211, D235, and D239. G271–D283 contributes to the NAD(+) binding site.

The protein belongs to the isocitrate and isopropylmalate dehydrogenases family. LeuB type 2 subfamily. As to quaternary structure, homodimer. Mg(2+) serves as cofactor. Mn(2+) is required as a cofactor.

Its subcellular location is the cytoplasm. It catalyses the reaction (2R,3S)-3-isopropylmalate + NAD(+) = 4-methyl-2-oxopentanoate + CO2 + NADH. The protein operates within amino-acid biosynthesis; L-leucine biosynthesis; L-leucine from 3-methyl-2-oxobutanoate: step 3/4. In terms of biological role, catalyzes the oxidation of 3-carboxy-2-hydroxy-4-methylpentanoate (3-isopropylmalate) to 3-carboxy-4-methyl-2-oxopentanoate. The product decarboxylates to 4-methyl-2 oxopentanoate. The protein is 3-isopropylmalate dehydrogenase of Mycobacterium avium (strain 104).